Consider the following 1199-residue polypeptide: Major DNA-binding protein (1199 aa).

Residues 289–314 (SGTTTARGARRNDVNSTSKPSPSGGF) form a disordered region. A zinc finger spans residues 497–510 (CSLCEKHTRPVCAH). 2 consecutive short sequence motifs (required for filament formation) follow at residues 841 to 842 (FW) and 1146 to 1148 (FNF). Residues 1172–1199 (LKRPPEDDELFDLSGIPIKHGNITMEMI) form a required for nuclear localization region.

It belongs to the herpesviridae major DNA-binding protein family. Homooligomers. Forms double-helical filaments necessary for the formation of replication compartments within the host nucleus. Interacts with the origin-binding protein. Interacts with the helicase primase complex; this interaction stimulates primer synthesis activity of the helicase-primase complex. Interacts with the DNA polymerase. Interacts with the alkaline exonuclease; this interaction increases its nuclease processivity.

The protein localises to the host nucleus. Plays several crucial roles in viral infection. Participates in the opening of the viral DNA origin to initiate replication by interacting with the origin-binding protein. May disrupt loops, hairpins and other secondary structures present on ssDNA to reduce and eliminate pausing of viral DNA polymerase at specific sites during elongation. Promotes viral DNA recombination by performing strand-transfer, characterized by the ability to transfer a DNA strand from a linear duplex to a complementary single-stranded DNA circle. Can also catalyze the renaturation of complementary single strands. Additionally, reorganizes the host cell nucleus, leading to the formation of prereplicative sites and replication compartments. This process is driven by the protein which can form double-helical filaments in the absence of DNA. The polypeptide is Major DNA-binding protein (Varicella-zoster virus (strain Oka vaccine) (HHV-3)).